The primary structure comprises 311 residues: N-acetyl-gamma-glutamyl-phosphate reductase (311 aa).

Residue Cys-117 is part of the active site.

Belongs to the NAGSA dehydrogenase family. Type 2 subfamily.

Its subcellular location is the cytoplasm. The enzyme catalyses N-acetyl-L-glutamate 5-semialdehyde + phosphate + NADP(+) = N-acetyl-L-glutamyl 5-phosphate + NADPH + H(+). It functions in the pathway amino-acid biosynthesis; L-arginine biosynthesis; N(2)-acetyl-L-ornithine from L-glutamate: step 3/4. Catalyzes the NADPH-dependent reduction of N-acetyl-5-glutamyl phosphate to yield N-acetyl-L-glutamate 5-semialdehyde. This chain is N-acetyl-gamma-glutamyl-phosphate reductase, found in Brucella anthropi (strain ATCC 49188 / DSM 6882 / CCUG 24695 / JCM 21032 / LMG 3331 / NBRC 15819 / NCTC 12168 / Alc 37) (Ochrobactrum anthropi).